A 183-amino-acid polypeptide reads, in one-letter code: uncharacterized protein (183 aa).

This is an uncharacterized protein from Saccharomyces cerevisiae (strain ATCC 204508 / S288c) (Baker's yeast).